The chain runs to 154 residues: 6,7-dimethyl-8-ribityllumazine synthase (154 aa).

Residues Phe26, 60-62, and 84-86 contribute to the 5-amino-6-(D-ribitylamino)uracil site; these read ALE and CII. 89–90 serves as a coordination point for (2S)-2-hydroxy-3-oxobutyl phosphate; sequence ET. His92 serves as the catalytic Proton donor. Position 117 (Asn117) interacts with 5-amino-6-(D-ribitylamino)uracil. Position 131 (Arg131) interacts with (2S)-2-hydroxy-3-oxobutyl phosphate.

The protein belongs to the DMRL synthase family.

The enzyme catalyses (2S)-2-hydroxy-3-oxobutyl phosphate + 5-amino-6-(D-ribitylamino)uracil = 6,7-dimethyl-8-(1-D-ribityl)lumazine + phosphate + 2 H2O + H(+). It functions in the pathway cofactor biosynthesis; riboflavin biosynthesis; riboflavin from 2-hydroxy-3-oxobutyl phosphate and 5-amino-6-(D-ribitylamino)uracil: step 1/2. Its function is as follows. Catalyzes the formation of 6,7-dimethyl-8-ribityllumazine by condensation of 5-amino-6-(D-ribitylamino)uracil with 3,4-dihydroxy-2-butanone 4-phosphate. This is the penultimate step in the biosynthesis of riboflavin. This Acidovorax ebreus (strain TPSY) (Diaphorobacter sp. (strain TPSY)) protein is 6,7-dimethyl-8-ribityllumazine synthase.